The following is a 119-amino-acid chain: Protein TusC (119 aa).

It belongs to the DsrF/TusC family. As to quaternary structure, heterohexamer, formed by a dimer of trimers. The hexameric TusBCD complex contains 2 copies each of TusB, TusC and TusD. The TusBCD complex interacts with TusE.

The protein resides in the cytoplasm. Functionally, part of a sulfur-relay system required for 2-thiolation of 5-methylaminomethyl-2-thiouridine (mnm(5)s(2)U) at tRNA wobble positions. This chain is Protein TusC, found in Klebsiella pneumoniae subsp. pneumoniae (strain ATCC 700721 / MGH 78578).